A 336-amino-acid polypeptide reads, in one-letter code: MTANDPSPNHLQLTRDGQLRHFLTLDGLGQPLLTDILDTADSFIEVGERSIKKVPLLRGRTVVNLFFESSTRTRSTFELAAKRLSADVLNLDISTSATSKGESLSDTLLNLEAMASDMFVVRHSQSGAPHFIAESVTPGVAIINAGDGRHAHPTQAMLDMLTIRQHKGRFEGLKVAIVGDVLHSRVARSQIRALNVLGAEEVRVIAPGTLLPRDVEDLGCTVEYDMARGMKDLDVVIMLRLQKERMEGALLPSEREFYRLYGLNQEKLGLAKPDCIVMHPGPINRGVEIESAVADGPQSVILNQVTNGIAIRMAVMSMAMGGQMAERQQRQQEGRA.

Carbamoyl phosphate-binding residues include arginine 72 and threonine 73. Position 100 (lysine 100) interacts with L-aspartate. Carbamoyl phosphate-binding residues include arginine 122, histidine 152, and glutamine 155. L-aspartate is bound by residues arginine 185 and arginine 240. Positions 281 and 282 each coordinate carbamoyl phosphate.

The protein belongs to the aspartate/ornithine carbamoyltransferase superfamily. ATCase family. Heterododecamer (2C3:3R2) of six catalytic PyrB chains organized as two trimers (C3), and six regulatory PyrI chains organized as three dimers (R2).

It carries out the reaction carbamoyl phosphate + L-aspartate = N-carbamoyl-L-aspartate + phosphate + H(+). It participates in pyrimidine metabolism; UMP biosynthesis via de novo pathway; (S)-dihydroorotate from bicarbonate: step 2/3. Its function is as follows. Catalyzes the condensation of carbamoyl phosphate and aspartate to form carbamoyl aspartate and inorganic phosphate, the committed step in the de novo pyrimidine nucleotide biosynthesis pathway. The sequence is that of Aspartate carbamoyltransferase catalytic subunit from Marinobacter nauticus (strain ATCC 700491 / DSM 11845 / VT8) (Marinobacter aquaeolei).